Reading from the N-terminus, the 838-residue chain is Calmodulin-binding transcription activator 6 (838 aa).

Residues V25–T134 constitute a DNA-binding region (CG-1). An ANK repeat occupies Q525 to L554. 3 consecutive IQ domains span residues S671–R700, M713–V742, and L788–E817. Residues W738–L760 are calmodulin-binding. A coiled-coil region spans residues K802–H822.

Belongs to the CAMTA family. In terms of tissue distribution, expressed in roots, stems, leaves, sepals, petals, stamen filaments, top of carpels, anthers and siliques, but not in stigmas.

It is found in the nucleus. Functionally, transcription activator that binds calmodulin in a calcium-dependent manner in vitro. Binds to the DNA consensus sequence 5'-[ACG]CGCG[GTC]-3'. Regulates transcriptional activity in response to calcium signals. In Arabidopsis thaliana (Mouse-ear cress), this protein is Calmodulin-binding transcription activator 6.